Consider the following 198-residue polypeptide: Putative peptidyl-prolyl cis-trans isomerase (198 aa).

Residues 14–195 (NEIKVAMHTN…HDVVIESIDV (182 aa)) form the PPIase cyclophilin-type domain.

Belongs to the cyclophilin-type PPIase family.

It carries out the reaction [protein]-peptidylproline (omega=180) = [protein]-peptidylproline (omega=0). In terms of biological role, PPIases accelerate the folding of proteins. It catalyzes the cis-trans isomerization of proline imidic peptide bonds in oligopeptides. The protein is Putative peptidyl-prolyl cis-trans isomerase of Staphylococcus haemolyticus (strain JCSC1435).